The chain runs to 830 residues: Probable glucan 1,3-beta-glucosidase D (830 aa).

Basic and acidic residues-rich tracts occupy residues 1-11 (MPGHSRSRDRL) and 74-84 (VHEHDHDHEYD). 3 disordered regions span residues 1–91 (MPGH…EEPW), 127–163 (MSGALGDDGPPPLPSDALGRGKGKKRLDRETRRQRRK), and 260–297 (GGPGMEMRHRGGGGPPAEGLLQKEGDWDGSTKGSSTSA). The Cytoplasmic segment spans residues 1 to 307 (MPGHSRSRDR…RPSFWKRYHK (307 aa)). Residues 147–163 (GKGKKRLDRETRRQRRK) show a composition bias toward basic residues. A helical; Signal-anchor for type II membrane protein membrane pass occupies residues 308 to 328 (TFIFFAILIVLAAIAIPVGII). Topologically, residues 329–830 (EARRLHGTSG…PSFGNLPEYY (502 aa)) are extracellular. Asparagine 341, asparagine 376, asparagine 381, asparagine 393, asparagine 397, asparagine 546, and asparagine 558 each carry an N-linked (GlcNAc...) asparagine glycan. Glutamate 597 serves as the catalytic Proton donor. 3 N-linked (GlcNAc...) asparagine glycosylation sites follow: asparagine 610, asparagine 669, and asparagine 689. Glutamate 702 functions as the Nucleophile in the catalytic mechanism.

It belongs to the glycosyl hydrolase 5 (cellulase A) family.

The protein localises to the cell membrane. It carries out the reaction Successive hydrolysis of beta-D-glucose units from the non-reducing ends of (1-&gt;3)-beta-D-glucans, releasing alpha-glucose.. Its function is as follows. Glucosidase involved in the degradation of cellulosic biomass. Active on lichenan. This Aspergillus niger (strain ATCC MYA-4892 / CBS 513.88 / FGSC A1513) protein is Probable glucan 1,3-beta-glucosidase D (exgD).